The chain runs to 550 residues: Glucose-6-phosphate isomerase (550 aa).

Glu-356 serves as the catalytic Proton donor. Residues His-387 and Lys-515 contribute to the active site.

The protein belongs to the GPI family.

It localises to the cytoplasm. The catalysed reaction is alpha-D-glucose 6-phosphate = beta-D-fructose 6-phosphate. It participates in carbohydrate biosynthesis; gluconeogenesis. It functions in the pathway carbohydrate degradation; glycolysis; D-glyceraldehyde 3-phosphate and glycerone phosphate from D-glucose: step 2/4. Its function is as follows. Catalyzes the reversible isomerization of glucose-6-phosphate to fructose-6-phosphate. This chain is Glucose-6-phosphate isomerase, found in Aliivibrio fischeri (strain MJ11) (Vibrio fischeri).